The primary structure comprises 729 residues: Ribosomal RNA large subunit methyltransferase K/L (729 aa).

Positions 47 to 158 (TFYRLCLWSR…KNELTLALDL (112 aa)) constitute a THUMP domain.

It belongs to the methyltransferase superfamily. RlmKL family.

The protein resides in the cytoplasm. It carries out the reaction guanosine(2445) in 23S rRNA + S-adenosyl-L-methionine = N(2)-methylguanosine(2445) in 23S rRNA + S-adenosyl-L-homocysteine + H(+). The enzyme catalyses guanosine(2069) in 23S rRNA + S-adenosyl-L-methionine = N(2)-methylguanosine(2069) in 23S rRNA + S-adenosyl-L-homocysteine + H(+). Specifically methylates the guanine in position 2445 (m2G2445) and the guanine in position 2069 (m7G2069) of 23S rRNA. The sequence is that of Ribosomal RNA large subunit methyltransferase K/L from Dichelobacter nodosus (strain VCS1703A).